Consider the following 228-residue polypeptide: Ribonuclease H (228 aa).

One can recognise an RNase H type-1 domain in the interval 2-142 (GPMRTIVYAD…ADRLATLGRR (141 aa)). 4 residues coordinate Mg(2+): Asp-11, Glu-49, Asp-71, and Asp-134.

This sequence belongs to the RNase H family. In terms of assembly, monomer. The cofactor is Mg(2+).

Its subcellular location is the cytoplasm. It catalyses the reaction Endonucleolytic cleavage to 5'-phosphomonoester.. Endonuclease that specifically degrades the RNA of RNA-DNA hybrids. The protein is Ribonuclease H of Methylorubrum extorquens (strain PA1) (Methylobacterium extorquens).